The following is a 410-amino-acid chain: Mating-type locus allele B1 protein (410 aa).

The interval Met-1–Cys-110 is variable domain between B alleles. A DNA-binding region (homeobox; TALE-type) is located at residues Asp-107–His-184. The tract at residues Arg-111 to Val-410 is highly conserved between B alleles. Disordered regions lie at residues Arg-202–Pro-239, Thr-278–Leu-335, and Ala-374–Val-395. Over residues Leu-205–Leu-233 the composition is skewed to low complexity. The Nuclear localization signal signature appears at Lys-276 to Arg-308. Residues Ala-291–Ser-307 show a composition bias toward basic residues. Residues Pro-312–Leu-335 are compositionally biased toward polar residues. A not essential for B1 function region spans residues Pro-333 to Val-410. The segment covering Arg-375–Gly-388 has biased composition (basic residues).

The protein belongs to the TALE/M-ATYP homeobox family.

The protein resides in the nucleus. The B locus has at least 25 alleles, and any combination of two different B alleles yields a multimeric regulatory protein, that activates genes responsible for the pathogenicity and for the sexual development of the fungus within the corn plant. This chain is Mating-type locus allele B1 protein, found in Mycosarcoma maydis (Corn smut fungus).